The primary structure comprises 432 residues: Adenylosuccinate synthetase (432 aa).

Residues glycine 13–lysine 19 and glycine 41–threonine 43 each bind GTP. Catalysis depends on aspartate 14, which acts as the Proton acceptor. Mg(2+)-binding residues include aspartate 14 and glycine 41. IMP is bound by residues aspartate 14–lysine 17, asparagine 39–histidine 42, threonine 130, arginine 144, glutamine 225, threonine 240, and arginine 304. The active-site Proton donor is the histidine 42. A substrate-binding site is contributed by alanine 300–arginine 306. GTP is bound by residues arginine 306, lysine 332–aspartate 334, and serine 415–glycine 417.

Belongs to the adenylosuccinate synthetase family. Homodimer. The cofactor is Mg(2+).

Its subcellular location is the cytoplasm. It catalyses the reaction IMP + L-aspartate + GTP = N(6)-(1,2-dicarboxyethyl)-AMP + GDP + phosphate + 2 H(+). The protein operates within purine metabolism; AMP biosynthesis via de novo pathway; AMP from IMP: step 1/2. Functionally, plays an important role in the de novo pathway of purine nucleotide biosynthesis. Catalyzes the first committed step in the biosynthesis of AMP from IMP. This is Adenylosuccinate synthetase from Histophilus somni (strain 129Pt) (Haemophilus somnus).